Consider the following 745-residue polypeptide: Polyribonucleotide nucleotidyltransferase (745 aa).

The Mg(2+) site is built by aspartate 487 and aspartate 493. Residues 554–613 (PSSTTVKIDKDKIKDIIGPGGKIIKEICETSNAKIDISDDGTVSIYASDRDKIKIALDKI) enclose the KH domain. Positions 623–691 (GEIFNGTVMK…NKGKAKLTIK (69 aa)) constitute an S1 motif domain. The disordered stretch occupies residues 693-732 (AYKDHSSNNTKQKNNVKDDSESEQRRDTSKKRTWNEDNNT). Basic and acidic residues predominate over residues 707–719 (NVKDDSESEQRRD).

It belongs to the polyribonucleotide nucleotidyltransferase family. It depends on Mg(2+) as a cofactor.

Its subcellular location is the cytoplasm. The enzyme catalyses RNA(n+1) + phosphate = RNA(n) + a ribonucleoside 5'-diphosphate. Its function is as follows. Involved in mRNA degradation. Catalyzes the phosphorolysis of single-stranded polyribonucleotides processively in the 3'- to 5'-direction. The chain is Polyribonucleotide nucleotidyltransferase from Rickettsia prowazekii (strain Madrid E).